The chain runs to 290 residues: Beta carbonic anhydrase 6, mitochondrial (290 aa).

A mitochondrion-targeting transit peptide spans 1-20 (MAFTLGGRARRLVSATSVHQ). At Ser122 the chain carries Phosphoserine. An S-nitrosocysteine modification is found at Cys226.

The protein belongs to the beta-class carbonic anhydrase family. Strongly expressed in aerial tissues including leaves, stems, flowers and siliques, and, to a lower extent, in roots. Accumulates in guard cells.

The protein localises to the mitochondrion. The enzyme catalyses hydrogencarbonate + H(+) = CO2 + H2O. Functionally, reversible hydration of carbon dioxide. The chain is Beta carbonic anhydrase 6, mitochondrial (BCA6) from Arabidopsis thaliana (Mouse-ear cress).